We begin with the raw amino-acid sequence, 256 residues long: Thiazole synthase (256 aa).

Catalysis depends on Lys-95, which acts as the Schiff-base intermediate with DXP. 1-deoxy-D-xylulose 5-phosphate-binding positions include Gly-156, 182 to 183, and 204 to 205; these read AG and NT.

This sequence belongs to the ThiG family. In terms of assembly, homotetramer. Forms heterodimers with either ThiH or ThiS.

Its subcellular location is the cytoplasm. The enzyme catalyses [ThiS sulfur-carrier protein]-C-terminal-Gly-aminoethanethioate + 2-iminoacetate + 1-deoxy-D-xylulose 5-phosphate = [ThiS sulfur-carrier protein]-C-terminal Gly-Gly + 2-[(2R,5Z)-2-carboxy-4-methylthiazol-5(2H)-ylidene]ethyl phosphate + 2 H2O + H(+). The protein operates within cofactor biosynthesis; thiamine diphosphate biosynthesis. Catalyzes the rearrangement of 1-deoxy-D-xylulose 5-phosphate (DXP) to produce the thiazole phosphate moiety of thiamine. Sulfur is provided by the thiocarboxylate moiety of the carrier protein ThiS. In vitro, sulfur can be provided by H(2)S. This is Thiazole synthase from Escherichia coli O6:H1 (strain CFT073 / ATCC 700928 / UPEC).